A 240-amino-acid polypeptide reads, in one-letter code: UDP-2,3-diacylglucosamine hydrolase (240 aa).

Asp8, His10, Asp41, Asn79, and His114 together coordinate Mn(2+). Residue Asn79–Arg80 participates in substrate binding. Residues Asp122, Ser160, Asn164, Lys167, and His195 each contribute to the substrate site. Mn(2+)-binding residues include His195 and His197.

The protein belongs to the LpxH family. Mn(2+) is required as a cofactor.

Its subcellular location is the cell inner membrane. It catalyses the reaction UDP-2-N,3-O-bis[(3R)-3-hydroxytetradecanoyl]-alpha-D-glucosamine + H2O = 2-N,3-O-bis[(3R)-3-hydroxytetradecanoyl]-alpha-D-glucosaminyl 1-phosphate + UMP + 2 H(+). It functions in the pathway glycolipid biosynthesis; lipid IV(A) biosynthesis; lipid IV(A) from (3R)-3-hydroxytetradecanoyl-[acyl-carrier-protein] and UDP-N-acetyl-alpha-D-glucosamine: step 4/6. In terms of biological role, hydrolyzes the pyrophosphate bond of UDP-2,3-diacylglucosamine to yield 2,3-diacylglucosamine 1-phosphate (lipid X) and UMP by catalyzing the attack of water at the alpha-P atom. Involved in the biosynthesis of lipid A, a phosphorylated glycolipid that anchors the lipopolysaccharide to the outer membrane of the cell. This is UDP-2,3-diacylglucosamine hydrolase from Escherichia coli O6:K15:H31 (strain 536 / UPEC).